Reading from the N-terminus, the 247-residue chain is Opacity protein opA52 (247 aa).

A1 is a signal peptide.

It belongs to the opacity porin family.

Its subcellular location is the cell outer membrane. In terms of biological role, implicated in a number of adherence functions. OPA proteins are implicated in pathogenesis and are subject to phase variation. In Neisseria gonorrhoeae, this protein is Opacity protein opA52 (opaG).